A 277-amino-acid polypeptide reads, in one-letter code: Small ribosomal subunit protein uS2 (277 aa).

Positions 1–78 are disordered; sequence MSENDEGTDA…PADEEPVLDE (78 aa).

Belongs to the universal ribosomal protein uS2 family.

The polypeptide is Small ribosomal subunit protein uS2 (Natronomonas pharaonis (strain ATCC 35678 / DSM 2160 / CIP 103997 / JCM 8858 / NBRC 14720 / NCIMB 2260 / Gabara) (Halobacterium pharaonis)).